The primary structure comprises 479 residues: 3-phytase B (479 aa).

The signal sequence occupies residues 1 to 19 (MPRTSLLTLACALATGASA). 5 cysteine pairs are disulfide-bonded: Cys71–Cys387, Cys128–Cys472, Cys216–Cys441, Cys225–Cys298, and Cys413–Cys421. The active-site Nucleophile is His82. Asn191 carries an N-linked (GlcNAc...) asparagine glycan. Residue Asn315 is glycosylated (N-linked (GlcNAc...) asparagine). The active-site Proton donor is the Asp338. An N-linked (GlcNAc...) asparagine glycan is attached at Asn458.

This sequence belongs to the histidine acid phosphatase family. As to quaternary structure, homodimer.

The catalysed reaction is 1D-myo-inositol hexakisphosphate + H2O = 1D-myo-inositol 1,2,4,5,6-pentakisphosphate + phosphate. Its function is as follows. Catalyzes the hydrolysis of inorganic orthophosphate from phytate. The protein is 3-phytase B (phyB) of Aspergillus awamori (Black koji mold).